We begin with the raw amino-acid sequence, 156 residues long: Small ribosomal subunit protein uS7 (156 aa).

Belongs to the universal ribosomal protein uS7 family. Part of the 30S ribosomal subunit. Contacts proteins S9 and S11.

Its function is as follows. One of the primary rRNA binding proteins, it binds directly to 16S rRNA where it nucleates assembly of the head domain of the 30S subunit. Is located at the subunit interface close to the decoding center, probably blocks exit of the E-site tRNA. This Clostridium acetobutylicum (strain ATCC 824 / DSM 792 / JCM 1419 / IAM 19013 / LMG 5710 / NBRC 13948 / NRRL B-527 / VKM B-1787 / 2291 / W) protein is Small ribosomal subunit protein uS7.